The following is a 632-amino-acid chain: 1-deoxy-D-xylulose-5-phosphate synthase (632 aa).

Residues 1-25 (MPTTFHEIPRKRPTTPLLDRANTPD) are disordered. Residues His-87 and 128-130 (GHS) each bind thiamine diphosphate. Asp-159 is a binding site for Mg(2+). Thiamine diphosphate is bound by residues 160 to 161 (GA), Asn-188, Phe-295, and Glu-378. Asn-188 contributes to the Mg(2+) binding site.

This sequence belongs to the transketolase family. DXPS subfamily. As to quaternary structure, homodimer. Requires Mg(2+) as cofactor. The cofactor is thiamine diphosphate.

The enzyme catalyses D-glyceraldehyde 3-phosphate + pyruvate + H(+) = 1-deoxy-D-xylulose 5-phosphate + CO2. Its pathway is metabolic intermediate biosynthesis; 1-deoxy-D-xylulose 5-phosphate biosynthesis; 1-deoxy-D-xylulose 5-phosphate from D-glyceraldehyde 3-phosphate and pyruvate: step 1/1. Functionally, catalyzes the acyloin condensation reaction between C atoms 2 and 3 of pyruvate and glyceraldehyde 3-phosphate to yield 1-deoxy-D-xylulose-5-phosphate (DXP). In Pseudomonas fluorescens (strain Pf0-1), this protein is 1-deoxy-D-xylulose-5-phosphate synthase.